The chain runs to 454 residues: Trichosetin biosynthesis cluster transcription factor TF22 (454 aa).

The zn(2)-C6 fungal-type DNA-binding region spans 13 to 47 (CDRCRSHKLKCTVSPEDSRSGPHKCTRCIRAQVTC). Residues 51 to 89 (PRSQSKRTPNGKNKPEKPKPELEPPQKTSPPVCSSSLAG) form a disordered region. The span at 52–61 (RSQSKRTPNG) shows a compositional bias: polar residues. A compositionally biased stretch (basic and acidic residues) spans 63-74 (NKPEKPKPELEP).

The protein localises to the nucleus. In terms of biological role, transcription factor that regulates the expression of the gene cluster that mediates the biosynthesis of trichosetin, a trans-fused decalin-containing tetramic acid with antimicrobial activity. Directly activates expression of only the three biosynthetic genes PKS-NRPS1, DA and ER, while TF23 and MFS-T are induced by the final product trichosetin and not by TF22. In Gibberella fujikuroi (strain CBS 195.34 / IMI 58289 / NRRL A-6831) (Bakanae and foot rot disease fungus), this protein is Trichosetin biosynthesis cluster transcription factor TF22.